The primary structure comprises 366 residues: 5-hydroxytryptamine receptor 1F (366 aa).

The Extracellular segment spans residues 1 to 24 (MDFLNSSDQNLTSEELLNRMPSKI). N-linked (GlcNAc...) asparagine glycosylation is found at Asn5 and Asn10. The helical transmembrane segment at 25 to 49 (LVSLTLSGLALMTTTINSLVIAAII) threads the bilayer. Residues 50-59 (VTRKLHHPAN) are Cytoplasmic-facing. A helical transmembrane segment spans residues 60–81 (YLICSLAVTDFLVAVLVMPFSI). Residues 82-96 (VYIVRESWIMGQVVC) lie on the Extracellular side of the membrane. The cysteines at positions 96 and 172 are disulfide-linked. A helical transmembrane segment spans residues 97-119 (DIWLSVDITCCTCSILHLSAIAL). Residues Asp103 and Cys107 each coordinate serotonin. Positions 120 to 122 (DRY) match the DRY motif; important for ligand-induced conformation changes motif. Residues 120-139 (DRYRAITDAVEYARKRTPKH) are Cytoplasmic-facing. A helical transmembrane segment spans residues 140–159 (AGIMITIVWIISVFISMPPL). Over 160–178 (FWRHQGTSRDDECIIKHDH) the chain is Extracellular. The helical transmembrane segment at 179 to 202 (IVSTIYSTFGAFYIPLALILILYY) threads the bilayer. Residues 203–291 (KIYRAAKTLY…KISGTRERKA (89 aa)) lie on the Cytoplasmic side of the membrane. Residues 292-315 (ATTLGLILGAFVICWLPFFVKELV) form a helical membrane-spanning segment. Residues 316–327 (VNVCDKCKISEE) lie on the Extracellular side of the membrane. The chain crosses the membrane as a helical span at residues 328 to 350 (MSNFLAWLGYLNSLINPLIYTIF). Residues 343-347 (NPLIY) carry the NPxxY motif; important for ligand-induced conformation changes and signaling motif. The Cytoplasmic portion of the chain corresponds to 351-366 (NEDFKKAFQKLVRCRC).

It belongs to the G-protein coupled receptor 1 family.

The protein resides in the cell membrane. G-protein coupled receptor for 5-hydroxytryptamine (serotonin). Also functions as a receptor for various alkaloids and psychoactive substances. Receptor for lasmiditan, a drug for the treatment of acute migraine. Ligand binding causes a conformation change that triggers signaling via guanine nucleotide-binding proteins (G proteins) and modulates the activity of downstream effectors, such as adenylate cyclase. HTR1F is coupled to G(i)/G(o) G alpha proteins and mediates inhibitory neurotransmission by inhibiting adenylate cyclase activity. The chain is 5-hydroxytryptamine receptor 1F from Homo sapiens (Human).